A 507-amino-acid polypeptide reads, in one-letter code: ATP synthase subunit alpha, chloroplastic (507 aa).

ATP is bound at residue 170 to 177 (GDRQTGKT).

Belongs to the ATPase alpha/beta chains family. As to quaternary structure, F-type ATPases have 2 components, CF(1) - the catalytic core - and CF(0) - the membrane proton channel. CF(1) has five subunits: alpha(3), beta(3), gamma(1), delta(1), epsilon(1). CF(0) has four main subunits: a, b, b' and c.

The protein resides in the plastid. Its subcellular location is the chloroplast thylakoid membrane. The enzyme catalyses ATP + H2O + 4 H(+)(in) = ADP + phosphate + 5 H(+)(out). Produces ATP from ADP in the presence of a proton gradient across the membrane. The alpha chain is a regulatory subunit. This chain is ATP synthase subunit alpha, chloroplastic, found in Drimys granadensis.